We begin with the raw amino-acid sequence, 120 residues long: Chaperonin GroEL (120 aa).

23-27 (DGTTT) contacts ATP.

This sequence belongs to the chaperonin (HSP60) family. Forms a cylinder of 14 subunits composed of two heptameric rings stacked back-to-back. Interacts with the co-chaperonin GroES.

It is found in the cytoplasm. The catalysed reaction is ATP + H2O + a folded polypeptide = ADP + phosphate + an unfolded polypeptide.. Its function is as follows. Together with its co-chaperonin GroES, plays an essential role in assisting protein folding. The GroEL-GroES system forms a nano-cage that allows encapsulation of the non-native substrate proteins and provides a physical environment optimized to promote and accelerate protein folding. The protein is Chaperonin GroEL of Mycobacterium intracellulare.